Reading from the N-terminus, the 136-residue chain is Large ribosomal subunit protein uL16 (136 aa).

The protein belongs to the universal ribosomal protein uL16 family. Part of the 50S ribosomal subunit.

Its function is as follows. Binds 23S rRNA and is also seen to make contacts with the A and possibly P site tRNAs. The sequence is that of Large ribosomal subunit protein uL16 from Ehrlichia chaffeensis (strain ATCC CRL-10679 / Arkansas).